The chain runs to 428 residues: 2-isopropylmalate synthase 2 (428 aa).

A Pyruvate carboxyltransferase domain is found at 40 to 302 (PFFMDVTLRD…EVPLNFSTIY (263 aa)). Mn(2+) contacts are provided by aspartate 49, histidine 241, histidine 243, and asparagine 277.

It belongs to the alpha-IPM synthase/homocitrate synthase family. LeuA type 1 subfamily. As to quaternary structure, homodimer. Requires Mn(2+) as cofactor.

It localises to the cytoplasm. The catalysed reaction is 3-methyl-2-oxobutanoate + acetyl-CoA + H2O = (2S)-2-isopropylmalate + CoA + H(+). Its pathway is amino-acid biosynthesis; L-leucine biosynthesis; L-leucine from 3-methyl-2-oxobutanoate: step 1/4. In terms of biological role, catalyzes the condensation of the acetyl group of acetyl-CoA with 3-methyl-2-oxobutanoate (2-ketoisovalerate) to form 3-carboxy-3-hydroxy-4-methylpentanoate (2-isopropylmalate). Has high alpha-isopropylmalate synthase activity and low citramalate synthase activity. This is 2-isopropylmalate synthase 2 from Leptospira interrogans serogroup Icterohaemorrhagiae serovar Lai (strain 56601).